Consider the following 188-residue polypeptide: Elongation factor P (188 aa).

Belongs to the elongation factor P family.

Its subcellular location is the cytoplasm. It participates in protein biosynthesis; polypeptide chain elongation. Functionally, involved in peptide bond synthesis. Stimulates efficient translation and peptide-bond synthesis on native or reconstituted 70S ribosomes in vitro. Probably functions indirectly by altering the affinity of the ribosome for aminoacyl-tRNA, thus increasing their reactivity as acceptors for peptidyl transferase. The polypeptide is Elongation factor P (Pelodictyon phaeoclathratiforme (strain DSM 5477 / BU-1)).